The chain runs to 153 residues: Nucleoside diphosphate kinase (153 aa).

Positions 13, 61, 89, 95, 106, and 116 each coordinate ATP. Residue Thr-95 is modified to Phosphothreonine. Catalysis depends on His-119, which acts as the Pros-phosphohistidine intermediate.

It belongs to the NDK family. As to quaternary structure, homohexamer and homotetramer. Interacts with TOM40 preferentially in an unfolded, unphosphorylated form. Requires Mg(2+) as cofactor. In terms of processing, the N-terminus is blocked.

It localises to the cytoplasm. The protein resides in the mitochondrion intermembrane space. It carries out the reaction a 2'-deoxyribonucleoside 5'-diphosphate + ATP = a 2'-deoxyribonucleoside 5'-triphosphate + ADP. The catalysed reaction is a ribonucleoside 5'-diphosphate + ATP = a ribonucleoside 5'-triphosphate + ADP. Its function is as follows. Major role in the synthesis of nucleoside triphosphates other than ATP. The ATP gamma phosphate is transferred to the NDP beta phosphate via a ping-pong mechanism, using a phosphorylated active-site intermediate. Required for repair of UV radiation- and etoposide-induced DNA damage. The protein is Nucleoside diphosphate kinase (YNK1) of Saccharomyces cerevisiae (strain ATCC 204508 / S288c) (Baker's yeast).